The sequence spans 290 residues: Arylamine N-acetyltransferase 1 (290 aa).

Residue M1 is modified to N-acetylmethionine. Catalysis depends on C68, which acts as the Acyl-thioester intermediate. CoA is bound by residues T103 and G104. 106–107 (IH) is a binding site for substrate. Active-site residues include H107 and D122. Residues Y208 and S214 each coordinate CoA.

This sequence belongs to the arylamine N-acetyltransferase family.

Its subcellular location is the cytoplasm. It catalyses the reaction an arylamine + acetyl-CoA = an N-acetylarylamine + CoA. This chain is Arylamine N-acetyltransferase 1 (NAT1), found in Oryctolagus cuniculus (Rabbit).